The chain runs to 214 residues: Putative nickel/cobalt efflux system MJ1092 (214 aa).

Helical transmembrane passes span 2-22 (VMIM…LHAL), 46-66 (ILLG…LGIL), 79-99 (VHDM…IWII), 116-136 (VITL…AVLL), 149-169 (IYVA…AVAF), and 188-208 (LPLI…AHPI).

Belongs to the NiCoT transporter (TC 2.A.52) family.

It is found in the cell membrane. Efflux system for nickel and cobalt. In Methanocaldococcus jannaschii (strain ATCC 43067 / DSM 2661 / JAL-1 / JCM 10045 / NBRC 100440) (Methanococcus jannaschii), this protein is Putative nickel/cobalt efflux system MJ1092.